A 160-amino-acid chain; its full sequence is Large ribosomal subunit protein uL16 (160 aa).

It belongs to the universal ribosomal protein uL16 family. As to quaternary structure, part of the 50S ribosomal subunit.

Its function is as follows. Binds 23S rRNA and is also seen to make contacts with the A and possibly P site tRNAs. This Prochlorococcus marinus (strain MIT 9301) protein is Large ribosomal subunit protein uL16.